The following is a 180-amino-acid chain: MASSLIFLLLVTLTFSASTLISAKSNTTTIIESTCKTTNYYKFCVSALKSDPRSPTADTKGLASIMVGVGMTNATSTANYIAGNLSATVKDTVLKKVLQDCSEKYALAADSLRLTIQDLDDEAYDYASMHVLAAQDYPNVCRNIFRRVKGLAYPVEIRRREASLRRICGVVSGILDRLVE.

A signal peptide spans 1-23 (MASSLIFLLLVTLTFSASTLISA). The N-linked (GlcNAc...) asparagine glycan is linked to asparagine 26. Cysteine 35 and cysteine 44 are joined by a disulfide. Asparagine 73 and asparagine 84 each carry an N-linked (GlcNAc...) asparagine glycan. An intrachain disulfide couples cysteine 101 to cysteine 141.

Belongs to the PMEI family. As to expression, mostly expressed at low levels in seedlings, stems, leaves and flowers (in all organs), and, to a lower extent, in roots and siliques.

The protein localises to the vacuole. Functionally, inhibits fructosidases from both cell wall (cell wall invertase CWI) and vacuoles (vacuolar invertase VI). The protein is Cell wall / vacuolar inhibitor of fructosidase 2 (C/VIF2) of Arabidopsis thaliana (Mouse-ear cress).